The chain runs to 155 residues: Myosin light chain alkali (155 aa).

2 EF-hand domains span residues 7–41 (REVE…LNLN) and 80–115 (GCYE…LGES).

Myosin is a hexamer of 2 heavy chains and 4 light chains.

The polypeptide is Myosin light chain alkali (Mlc1) (Drosophila simulans (Fruit fly)).